The sequence spans 359 residues: uncharacterized protein (359 aa).

Residues 43 to 309 form the Protein kinase domain; sequence YHLIRKLGSG…VLDFLGDDWG (267 aa). ATP-binding positions include 49–57 and Lys-72; that span reads LGSGSYGRV. Catalysis depends on Asp-163, which acts as the Proton acceptor. The segment at 314–359 is disordered; that stretch reads REGPGVLGSAVSYEDREEGGSSLEEWTDEGDDSKSGGRTGTDGGAP. Over residues 350–359 the composition is skewed to gly residues; that stretch reads GRTGTDGGAP.

This sequence belongs to the protein kinase superfamily. Ser/Thr protein kinase family. STKL subfamily.

It carries out the reaction L-seryl-[protein] + ATP = O-phospho-L-seryl-[protein] + ADP + H(+). The enzyme catalyses L-threonyl-[protein] + ATP = O-phospho-L-threonyl-[protein] + ADP + H(+). This is an uncharacterized protein from Homo sapiens (Human).